Reading from the N-terminus, the 707-residue chain is F-box/WD repeat-containing protein 7 (707 aa).

Residues 1-151 are disordered; sequence MNQELLSVGS…SVTNSSSIVD (151 aa). Serine 26 bears the Phosphoserine; by ATM mark. Residues 57–68 show a composition bias toward low complexity; it reads GEVVGVEPRPGG. The span at 69-84 shows a compositional bias: polar residues; sequence QNDSQQGQLEENNNRF. The segment covering 87–129 has biased composition (acidic residues); that stretch reads VDEDSSGNQEEQEEDEEHAGEQDEEDEEEEEMDQESDDFDQSD. The segment covering 130-139 has biased composition (basic and acidic residues); it reads DSSREDEHTH. At threonine 205 the chain carries Phosphothreonine. Phosphoserine; by SGK1 is present on serine 227. The 47-residue stretch at 278–324 folds into the F-box domain; the sequence is RDFISLLPKELALYVLSFLEPKDLLQAAQTCRYWRILAEDNLLWREK. WD repeat units lie at residues 378–418, 420–456, 459–498, 500–536, 539–578, 580–618, and 622–659; these read GHDD…RTLV, HTGG…CIHT, GHTS…HVLM, HVAA…CLHT, GHTN…HTLT, HQSL…QTLQ, and KHQS…FIRN.

In terms of assembly, homodimer; homodimerization plays a role in substrate binding and/or ubiquitination and degradation. Component of the SCF(FBXW7) complex consisting of CUL1, RBX1, SKP1 and FBXW7. Interacts (via F-box domain) with SKP1. Interacts (via F-box domain) with pseudophosphatase STYX; the interaction is direct and prevents FBXW7 interaction with SKP1. Interacts with cyclin-E (CCNE1 or CCNE2). Interacts with PSEN1. Forms a trimeric complex with NOTCH1 and SGK1. Interacts with NOTCH1 intracellular domain/NICD and NOTCH4 intracellular domain/NICD. Interacts with NOTCH2 intracellular domain (N2ICD). Interacts with MYC (when phosphorylated). Interacts with USP28, counteracting ubiquitination of MYC. Interacts with JUN. Found in a complex with JUN and PRR7. Interacts with JUN and PRR7; the interaction inhibits ubiquitination-mediated JUN degradation, promoting its phosphorylation and transcriptional activity. Interacts (when phosphorylated at Thr-205) with PIN1, disrupting FBXW7 dimerization and promoting FBXW7 autoubiquitination and degradation. Interacts with UBE2QL1. Interacts with FAM83D; promotes FBXW7 degradation. Interacts with MYCN; FBXW7 competes with AURKA for binding to unphosphorylated MYCN but not for binding to phosphorylated MYCN. Interacts with STOML1. Interacts with NFE2L1. Interacts with USP36, counteracting ubiquitination of MYC. Interacts with NR1D1. Interacts with RICTOR; mediates RICTOR ubiquitination and degradation. Interacts with USP38, counteracting ubiquitination of MYC. As to quaternary structure, (Microbial infection) Interacts (via WD repeats) with SV40 large T antigen (via CPD region). Phosphorylation at Thr-205 promotes interaction with PIN1, leading to disrupt FBXW7 dimerization and promoting FBXW7 autoubiquitination and degradation. Phosphorylated by ATM at Ser-26 in response to DNA damage, promoting recruitment to DNA damage sites and 'Lys-63'-linked ubiquitination of phosphorylated XRCC4. Post-translationally, ubiquitinated: autoubiquitinates following phosphorylation at Thr-205 and subsequent interaction with PIN1. Ubiquitination leads to its proteasomal degradation. As to expression, widely expressed. In terms of tissue distribution, expressed in brain.

The protein resides in the nucleus. It localises to the nucleoplasm. Its subcellular location is the chromosome. The protein localises to the cytoplasm. It is found in the nucleolus. It functions in the pathway protein modification; protein ubiquitination. In terms of biological role, substrate recognition component of a SCF (SKP1-CUL1-F-box protein) E3 ubiquitin-protein ligase complex which mediates the ubiquitination and subsequent proteasomal degradation of target proteins. Recognizes and binds phosphorylated sites/phosphodegrons within target proteins and thereafter brings them to the SCF complex for ubiquitination. Identified substrates include cyclin-E (CCNE1 or CCNE2), DISC1, JUN, MYC, NOTCH1 released notch intracellular domain (NICD), NFE2L1, NOTCH2, MCL1, MLST8, RICTOR, and probably PSEN1. Acts as a negative regulator of JNK signaling by binding to phosphorylated JUN and promoting its ubiquitination and subsequent degradation. Involved in bone homeostasis and negative regulation of osteoclast differentiation. Regulates the amplitude of the cyclic expression of hepatic core clock genes and genes involved in lipid and glucose metabolism via ubiquitination and proteasomal degradation of their transcriptional repressor NR1D1; CDK1-dependent phosphorylation of NR1D1 is necessary for SCF(FBXW7)-mediated ubiquitination. Also able to promote 'Lys-63'-linked ubiquitination in response to DNA damage. The SCF(FBXW7) complex facilitates double-strand break repair following phosphorylation by ATM: phosphorylation promotes localization to sites of double-strand breaks and 'Lys-63'-linked ubiquitination of phosphorylated XRCC4, enhancing DNA non-homologous end joining. The protein is F-box/WD repeat-containing protein 7 of Homo sapiens (Human).